A 567-amino-acid chain; its full sequence is Hexose transporter HXT15 (567 aa).

Residues 1–19 are compositionally biased toward polar residues; it reads MASEQSSPEINADNLNSSA. The tract at residues 1–32 is disordered; sequence MASEQSSPEINADNLNSSAADVHVQPPGEKEW. Residues 1–55 are Cytoplasmic-facing; sequence MASEQSSPEINADNLNSSAADVHVQPPGEKEWSDGFYDKEVINGNTPDAPKRGFL. A helical transmembrane segment spans residues 56–76; it reads GYLIIYLLCYPVSFGGFLPGW. Residues 77–112 lie on the Extracellular side of the membrane; that stretch reads DSGITAGFINMDNFKMNFGSYKHSTGEYYLSNVRMG. Residues 113-133 form a helical membrane-spanning segment; sequence LLVAMFSVGCSIGGVAFARLA. The Cytoplasmic segment spans residues 134-139; sequence DTLGRR. A helical transmembrane segment spans residues 140 to 160; that stretch reads LAIVIVVLVYMVGAIIQISSN. Over 161-170 the chain is Extracellular; the sequence is HKWYQYFVGK. The chain crosses the membrane as a helical span at residues 171–191; the sequence is IIYGLGAGGCSVLCPMLLSEI. Over 192 to 197 the chain is Cytoplasmic; it reads APTDLR. Residues 198–218 form a helical membrane-spanning segment; it reads GGLVSLYQLNMTFGIFLGYCS. Residues 219–232 are Extracellular-facing; it reads VYGTRKYSNTAQWR. Residues 233–253 traverse the membrane as a helical segment; the sequence is IPVGLCFLWALIIIVGMLLVP. Topologically, residues 254-336 are cytoplasmic; sequence ESPRYLIECE…VQTFLQLTGE (83 aa). A helical transmembrane segment spans residues 337–353; the sequence is NYFFFYGTTIFKSVGLT. Residues 354 to 359 are Extracellular-facing; the sequence is DGFETS. Residues 360–377 traverse the membrane as a helical segment; sequence IVLGTVNFFSTIIAVMVV. At 378-384 the chain is on the cytoplasmic side; that stretch reads DKIGRRK. A helical transmembrane segment spans residues 385-405; it reads CLLFGAASMMACMVIFASIGV. At 406–427 the chain is on the extracellular side; sequence KCLYPHGQDGPSSKGAGNAMIV. A helical transmembrane segment spans residues 428–448; sequence FTCFYIFCFATTWAPVAYIVV. The Cytoplasmic portion of the chain corresponds to 449–465; sequence AESFPSKVKSKAMSIST. A helical transmembrane segment spans residues 466 to 486; sequence AFNWLWQFLIGFFTPFITGSI. Residue histidine 487 is a topological domain, extracellular. The helical transmembrane segment at 488-508 threads the bilayer; sequence FYYGYVFVGCLVAMFLYVFFF. The Cytoplasmic segment spans residues 509–567; it reads LPETIGLSLEEIQLLYEEGIKPWKSASWVPPSRRGASSRETEAKKKSWKEVLKFPKSFN. The interval 533 to 555 is disordered; the sequence is SASWVPPSRRGASSRETEAKKKS. Over residues 545–555 the composition is skewed to basic and acidic residues; that stretch reads SSRETEAKKKS.

Belongs to the major facilitator superfamily. Sugar transporter (TC 2.A.1.1) family.

It is found in the membrane. Its function is as follows. Probable glucose transporter. The polypeptide is Hexose transporter HXT15 (HXT15) (Saccharomyces cerevisiae (strain ATCC 204508 / S288c) (Baker's yeast)).